Here is a 217-residue protein sequence, read N- to C-terminus: Uracil-DNA glycosylase (217 aa).

Asp-62 serves as the catalytic Proton acceptor.

The protein belongs to the uracil-DNA glycosylase (UDG) superfamily. UNG family.

The protein localises to the cytoplasm. It catalyses the reaction Hydrolyzes single-stranded DNA or mismatched double-stranded DNA and polynucleotides, releasing free uracil.. Functionally, excises uracil residues from the DNA which can arise as a result of misincorporation of dUMP residues by DNA polymerase or due to deamination of cytosine. This chain is Uracil-DNA glycosylase, found in Streptococcus pyogenes serotype M4 (strain MGAS10750).